A 159-amino-acid polypeptide reads, in one-letter code: ATP synthase subunit b (159 aa).

The helical transmembrane segment at 8-28 (ILATIINFIILILILKHFFWD) threads the bilayer.

This sequence belongs to the ATPase B chain family. F-type ATPases have 2 components, F(1) - the catalytic core - and F(0) - the membrane proton channel. F(1) has five subunits: alpha(3), beta(3), gamma(1), delta(1), epsilon(1). F(0) has three main subunits: a(1), b(2) and c(10-14). The alpha and beta chains form an alternating ring which encloses part of the gamma chain. F(1) is attached to F(0) by a central stalk formed by the gamma and epsilon chains, while a peripheral stalk is formed by the delta and b chains.

Its subcellular location is the cell membrane. F(1)F(0) ATP synthase produces ATP from ADP in the presence of a proton or sodium gradient. F-type ATPases consist of two structural domains, F(1) containing the extramembraneous catalytic core and F(0) containing the membrane proton channel, linked together by a central stalk and a peripheral stalk. During catalysis, ATP synthesis in the catalytic domain of F(1) is coupled via a rotary mechanism of the central stalk subunits to proton translocation. Functionally, component of the F(0) channel, it forms part of the peripheral stalk, linking F(1) to F(0). The sequence is that of ATP synthase subunit b from Clostridium perfringens (strain SM101 / Type A).